Consider the following 508-residue polypeptide: Matrix metalloproteinase-19 (508 aa).

Residues 1-18 form the signal peptide; sequence MNCQQLWLGFLLPMTVSG. Residues 19–97 constitute a propeptide that is removed on maturation; the sequence is RVLGLAEVAP…EDPFNQKTLK (79 aa). Residues 83–90 carry the Cysteine switch motif; it reads PRCGLEDP. C85 and H212 together coordinate Zn(2+). The active site involves E213. Positions 216 and 222 each coordinate Zn(2+). The interval 262–288 is disordered; that stretch reads IRDEEEEETELPTVPPVPTEPSPMPDP. Positions 274-287 are enriched in pro residues; it reads TVPPVPTEPSPMPD. Hemopexin repeat units lie at residues 286–333, 334–380, 381–425, and 426–472; these read PDPC…WEGL, PGNL…EPNL, DAAL…FTGV, and PNQP…WMHC. The cysteines at positions 289 and 472 are disulfide-linked. N464 is a glycosylation site (N-linked (GlcNAc...) asparagine).

This sequence belongs to the peptidase M10A family. Zn(2+) serves as cofactor. Ca(2+) is required as a cofactor. Post-translationally, activated by autolytic cleavage after Lys-97. Tyrosine phosphorylated by PKDCC/VLK. In terms of tissue distribution, expressed in mammary gland, placenta, lung, pancreas, ovary, small intestine, spleen, thymus, prostate, testis colon, heart and blood vessel walls. Not detected in brain and peripheral blood leukocytes. Also expressed in the synovial fluid of normal and rheumatoid patients.

It is found in the secreted. It localises to the extracellular space. The protein localises to the extracellular matrix. Strongly inhibited by TIMP-2, TIMP-3 and TIMP-4, while TIMP-1 is less efficient. Endopeptidase that degrades various components of the extracellular matrix, such as aggrecan and cartilage oligomeric matrix protein (comp), during development, haemostasis and pathological conditions (arthritic disease). May also play a role in neovascularization or angiogenesis. Hydrolyzes collagen type IV, laminin, nidogen, nascin-C isoform, fibronectin, and type I gelatin. This chain is Matrix metalloproteinase-19 (MMP19), found in Homo sapiens (Human).